A 560-amino-acid polypeptide reads, in one-letter code: Glycolate permease GlcA (560 aa).

Residues 1 to 13 lie on the Cytoplasmic side of the membrane; sequence MVTWTQMYMPMGG. The helical transmembrane segment at 14-34 threads the bilayer; sequence LGLSALVALIPIIFFFVALAV. The Periplasmic portion of the chain corresponds to 35 to 41; it reads LRLKGHV. Residues 42-62 traverse the membrane as a helical segment; sequence AGAITLILSILIAIFAFKMPI. Residues 63–69 lie on the Cytoplasmic side of the membrane; sequence DMAFAAA. A helical membrane pass occupies residues 70–90; sequence GYGFIYGLWPIAWIIVAAVFL. Over 91–130 the chain is Periplasmic; the sequence is YKLTVASGQFDIIRSSVISITDDQRLQVLLIGFSFGALLE. The chain crosses the membrane as a helical span at residues 131 to 151; that stretch reads GAAGFGAPVAITGALLVGLGF. Over 152–158 the chain is Cytoplasmic; it reads KPLYAAG. The helical transmembrane segment at 159 to 179 threads the bilayer; that stretch reads LCLIANTAPVAFGALGVPILV. Residues 180–199 lie on the Periplasmic side of the membrane; sequence AGQVTGIDPFHIGAMAGRQL. Residues 200–220 form a helical membrane-spanning segment; sequence PFLSVLVPFWLVAMMDGWKGV. Topologically, residues 221-225 are cytoplasmic; it reads KETWP. A helical transmembrane segment spans residues 226 to 246; it reads AALVAGGSFAVTQFFTSNYIG. Residues 247-248 are Periplasmic-facing; that stretch reads PE. A helical transmembrane segment spans residues 249–269; it reads LPDITSALVSIVSLALFLKVW. The Cytoplasmic segment spans residues 270 to 313; the sequence is RPKNTETAISMGQSAGAMVVNKPSSGGPVPSEYSLGQIIRAWSP. Residues 314 to 334 traverse the membrane as a helical segment; that stretch reads FLILTVLVTIWTMKPFKALFA. Over 335-378 the chain is Periplasmic; that stretch reads PGGAFYSLVINFQIPHLHQQVLKAAPIVAQPTPMDAVFKFDPLS. The chain crosses the membrane as a helical span at residues 379 to 399; that stretch reads AGGTAIFIAAIISIFILGVGI. Over 400–408 the chain is Cytoplasmic; sequence KKGIGVFAE. A helical membrane pass occupies residues 409-429; sequence TLISLKWPILSIGMVLAFAFV. The Periplasmic segment spans residues 430–438; sequence TNYSGMSTT. Residues 439–459 form a helical membrane-spanning segment; sequence LALVLAGTGVMFPFFSPFLGW. Residues 460 to 536 lie on the Cytoplasmic side of the membrane; it reads LGVFLTGSDT…ELFRYTVKHS (77 aa). The chain crosses the membrane as a helical span at residues 537–557; sequence LIFASVIGIITLLQAYVFTGM. Residues 558–560 are Periplasmic-facing; it reads LVS.

The protein belongs to the lactate permease family.

Its subcellular location is the cell inner membrane. The catalysed reaction is glycolate(in) + H(+)(in) = glycolate(out) + H(+)(out). The enzyme catalyses (S)-lactate(in) + H(+)(in) = (S)-lactate(out) + H(+)(out). It carries out the reaction (R)-lactate(in) + H(+)(in) = (R)-lactate(out) + H(+)(out). With respect to regulation, inhibited by the proton ionophore carbonyl cyanide m-chlorophenylhydrazone (CCCP). Uptake of glycolate across the membrane. Can also transport L-lactate and D-lactate. Seems to be driven by a proton motive force. This Escherichia coli (strain K12) protein is Glycolate permease GlcA.